The following is a 70-amino-acid chain: Conotoxin ba3a (70 aa).

Positions Met1 to Leu20 are cleaved as a signal peptide. The propeptide occupies Gln21–Arg55.

Expressed by the venom duct.

The protein localises to the secreted. The chain is Conotoxin ba3a from Conus bayani (Bayan's cone).